The primary structure comprises 332 residues: Ketol-acid reductoisomerase (NADP(+)) (332 aa).

One can recognise a KARI N-terminal Rossmann domain in the interval 2 to 182 (AKVYYDEDAS…GCTRAGLIET (181 aa)). NADP(+) contacts are provided by residues 25-28 (YGSQ), S51, S53, and 83-86 (DTIQ). The active site involves H108. G134 provides a ligand contact to NADP(+). Residues 183-327 (TFKEETETDL…KELRKMMPWL (145 aa)) form the KARI C-terminal knotted domain. D191, E195, E227, and E231 together coordinate Mg(2+). S252 serves as a coordination point for substrate.

This sequence belongs to the ketol-acid reductoisomerase family. The cofactor is Mg(2+).

It carries out the reaction (2R)-2,3-dihydroxy-3-methylbutanoate + NADP(+) = (2S)-2-acetolactate + NADPH + H(+). It catalyses the reaction (2R,3R)-2,3-dihydroxy-3-methylpentanoate + NADP(+) = (S)-2-ethyl-2-hydroxy-3-oxobutanoate + NADPH + H(+). It participates in amino-acid biosynthesis; L-isoleucine biosynthesis; L-isoleucine from 2-oxobutanoate: step 2/4. The protein operates within amino-acid biosynthesis; L-valine biosynthesis; L-valine from pyruvate: step 2/4. Functionally, involved in the biosynthesis of branched-chain amino acids (BCAA). Catalyzes an alkyl-migration followed by a ketol-acid reduction of (S)-2-acetolactate (S2AL) to yield (R)-2,3-dihydroxy-isovalerate. In the isomerase reaction, S2AL is rearranged via a Mg-dependent methyl migration to produce 3-hydroxy-3-methyl-2-ketobutyrate (HMKB). In the reductase reaction, this 2-ketoacid undergoes a metal-dependent reduction by NADPH to yield (R)-2,3-dihydroxy-isovalerate. The polypeptide is Ketol-acid reductoisomerase (NADP(+)) (Persephonella marina (strain DSM 14350 / EX-H1)).